The primary structure comprises 367 residues: (E)-2-epi-beta-caryophyllene synthase (367 aa).

Mg(2+) contacts are provided by D93, N234, and S238. The DDXXE motif signature appears at 93–97 (DDIAE).

It belongs to the terpene synthase family. It depends on Mg(2+) as a cofactor. Requires Mn(2+) as cofactor.

The catalysed reaction is (2E,6E)-farnesyl diphosphate = (E)-2-epi-beta-caryophyllene + diphosphate. It participates in secondary metabolite biosynthesis; terpenoid biosynthesis. Sesquiterpene synthase converting farnesyl diphosphate to (E)-2-epi-beta-caryophyllene as the major product, and to two other unidentified sesquiterpenes. Has no diterpene synthase activity. This chain is (E)-2-epi-beta-caryophyllene synthase, found in Selaginella moellendorffii (Spikemoss).